A 521-amino-acid polypeptide reads, in one-letter code: Cell cycle checkpoint protein hpr-9 (521 aa).

Disordered stretches follow at residues 1-20 (MQAI…TRER), 318-375 (QHEE…NRFV), and 492-521 (GTET…YESR). 2 stretches are compositionally biased toward polar residues: residues 355–370 (ESLS…SLPS) and 493–504 (TETTSKMRMSQQ).

Belongs to the rad9 family. In terms of assembly, putative component of the toroidal 9-1-1 (RAD9-RAD1-HUS1) complex, composed of hpr-9, mrt-2 and hus-1.

In terms of biological role, may be a component of the 9-1-1 cell-cycle checkpoint response complex that plays a major role in DNA repair. The polypeptide is Cell cycle checkpoint protein hpr-9 (Caenorhabditis elegans).